The primary structure comprises 491 residues: MNTQQLAKLRSIVPEMRRVRHIHFVGIGGAGMGGIAEVLANEGYQISGSDLAPNPVTQQLTSLGATIFFNHRPENVRDASVVVVSSAISADNPEIVAAHEARIPVIRRAEMLAELMRFRHGIAIAGTHGKTTTTAMVSSIYAEAGLDPTFVNGGLVKAAGVHARLGHSRYLIAEADESDASFLHLQPMVAIVTNIEADHMDTYHGDFENLKQTFINFLHNLPFYGRAVMCVDDPVIRELLPRVGRQTTTYGFSEDADVRVEDYQQIGPQGHFTLLRQGMPDLHVTLNAPGRHNALNAAAAVAVATEEGIADDAILRALESFQGTGRRFDFLGEFPLEPVNGKAGTAMLVDDYGHHPTEVDATIKAARAGWPDKNLVMLFQPHRYTRTRDLYDDFANVLTQVDALLMLDVYPAGEAPIPGADSRSLCRTIRNRGKIDPILVSDPAQVATMLAPVLTGNDLILVQGAGNVGKIARYLSEIKLKPQIQEEEQHG.

126 to 132 (GTHGKTT) contacts ATP.

It belongs to the MurCDEF family.

It is found in the cytoplasm. It catalyses the reaction UDP-N-acetyl-alpha-D-muramate + L-alanine + ATP = UDP-N-acetyl-alpha-D-muramoyl-L-alanine + ADP + phosphate + H(+). The protein operates within cell wall biogenesis; peptidoglycan biosynthesis. Functionally, cell wall formation. The polypeptide is UDP-N-acetylmuramate--L-alanine ligase (Salmonella typhimurium (strain LT2 / SGSC1412 / ATCC 700720)).